Reading from the N-terminus, the 337-residue chain is Protein-arginine kinase (337 aa).

In terms of domain architecture, Phosphagen kinase C-terminal spans 12–240 (IVIASKVKIL…NKLILREKNQ (229 aa)). Residues 15–19 (ASKVK), 162–166 (RAKVF), and 193–198 (KSIYNS) contribute to the ATP site.

The protein belongs to the ATP:guanido phosphotransferase family.

The catalysed reaction is L-arginyl-[protein] + ATP = N(omega)-phospho-L-arginyl-[protein] + ADP + H(+). In terms of biological role, catalyzes the specific phosphorylation of arginine residues in proteins. This chain is Protein-arginine kinase, found in Clostridium perfringens (strain ATCC 13124 / DSM 756 / JCM 1290 / NCIMB 6125 / NCTC 8237 / Type A).